The following is a 384-amino-acid chain: tRNA-specific 2-thiouridylase MnmA (384 aa).

ATP-binding positions include 9 to 16 and methionine 35; that span reads GMSGGVDS. An interaction with target base in tRNA region spans residues 95 to 97; the sequence is NPD. The active-site Nucleophile is the cysteine 100. Cysteines 100 and 196 form a disulfide. Glycine 124 provides a ligand contact to ATP. The segment at 146–148 is interaction with tRNA; the sequence is KDQ. The Cysteine persulfide intermediate role is filled by cysteine 196. The tract at residues 308–309 is interaction with tRNA; sequence RY.

It belongs to the MnmA/TRMU family.

The protein resides in the cytoplasm. It catalyses the reaction S-sulfanyl-L-cysteinyl-[protein] + uridine(34) in tRNA + AH2 + ATP = 2-thiouridine(34) in tRNA + L-cysteinyl-[protein] + A + AMP + diphosphate + H(+). In terms of biological role, catalyzes the 2-thiolation of uridine at the wobble position (U34) of tRNA, leading to the formation of s(2)U34. This is tRNA-specific 2-thiouridylase MnmA from Burkholderia vietnamiensis (strain G4 / LMG 22486) (Burkholderia cepacia (strain R1808)).